A 601-amino-acid polypeptide reads, in one-letter code: Glutathione-regulated potassium-efflux system protein KefB (601 aa).

13 helical membrane-spanning segments follow: residues 4 to 24, 29 to 49, 55 to 75, 87 to 107, 111 to 131, 152 to 172, 177 to 197, 207 to 227, 230 to 250, 262 to 282, 284 to 304, 324 to 344, and 356 to 376; these read ADLL…VPLA, IGAV…GLGF, EILH…GLEL, IFGV…GLLM, FLWQ…TAMA, VLLF…LLAG, HFDW…LIGG, FIAA…LVLS, LFMD…GVLL, AIDP…GMSL, LGVL…LVVI, MQFA…FSTA, and ALLL…MKGI. Positions 400 to 519 constitute an RCK N-terminal domain; the sequence is KPQVIVVGFG…AGVTQFSRET (120 aa).

It belongs to the monovalent cation:proton antiporter 2 (CPA2) transporter (TC 2.A.37) family. KefB subfamily. In terms of assembly, interacts with the regulatory subunit KefG.

The protein localises to the cell inner membrane. Its function is as follows. Pore-forming subunit of a potassium efflux system that confers protection against electrophiles. Catalyzes K(+)/H(+) antiport. This is Glutathione-regulated potassium-efflux system protein KefB from Salmonella paratyphi B (strain ATCC BAA-1250 / SPB7).